We begin with the raw amino-acid sequence, 238 residues long: Riboflavin synthase (238 aa).

Lumazine-binding repeat units follow at residues 1 to 103 (MFTG…FGGH) and 104 to 205 (YVQG…EKQI). 2,4-dihydroxypteridine contacts are provided by residues 4–6 (GIV), 54–56 (CLT), and 68–73 (GISPET). The residue at position 95 (serine 95) is a Phosphoserine. Residues 107–109 (GHV), lysine 143, 152–154 (SLT), and 170–175 (SMIKHT) contribute to the 2,4-dihydroxypteridine site.

In terms of assembly, homotrimer.

It carries out the reaction 2 6,7-dimethyl-8-(1-D-ribityl)lumazine + H(+) = 5-amino-6-(D-ribitylamino)uracil + riboflavin. It participates in cofactor biosynthesis; riboflavin biosynthesis; riboflavin from 2-hydroxy-3-oxobutyl phosphate and 5-amino-6-(D-ribitylamino)uracil: step 2/2. Functionally, catalyzes the dismutation of two molecules of 6,7-dimethyl-8-ribityllumazine, resulting in the formation of riboflavin and 5-amino-6-(D-ribitylamino)uracil. This chain is Riboflavin synthase, found in Saccharomyces cerevisiae (strain ATCC 204508 / S288c) (Baker's yeast).